The sequence spans 618 residues: Mitochondrial Rho GTPase 2 (618 aa).

The Cytoplasmic segment spans residues M1–R592. The Miro 1 domain maps to R2–H168. GTP is bound by residues G16, K17, T18, and S19. Residue T18 participates in Mg(2+) binding. Residues P35 and D57 each coordinate Mg(2+). S59 is a binding site for GTP. K96 is covalently cross-linked (Glycyl lysine isopeptide (Lys-Gly) (interchain with G-Cter in ubiquitin)). Positions 118, 119, 121, 149, and 150 each coordinate GTP. K119 is covalently cross-linked (Glycyl lysine isopeptide (Lys-Gly) (interchain with G-Cter in ubiquitin)). K164 participates in a covalent cross-link: Glycyl lysine isopeptide (Lys-Gly) (interchain with G-Cter in ubiquitin). EF-hand domains lie at A184–H219 and L304–A339. Ca(2+) contacts are provided by D197, D199, D201, E208, D317, D319, D321, and E328. In terms of domain architecture, Miro 2 spans R414–F576. Residues G426, G428, K429, S430, and A431 each coordinate GTP. GDP contacts are provided by G426, G428, K429, S430, and A431. S430 serves as a coordination point for Mg(2+). Residue E471 coordinates Mg(2+). GTP contacts are provided by K525, D527, and C556. GDP-binding residues include K525, D527, and C556. Residues G593–V615 traverse the membrane as a helical; Anchor for type IV membrane protein segment. Topologically, residues K616–Q618 are mitochondrial intermembrane.

It belongs to the mitochondrial Rho GTPase family. As to quaternary structure, homodimer. Interacts with the kinesin-binding proteins TRAK1/OIP106 and TRAK2/GRIF1, forming a link between mitochondria and the trafficking apparatus of the microtubules. Interacts with ARMCX3. Found in a complex with KIF5B, OGT, RHOT1 and TRAK1. Post-translationally, ubiquitinated by PRKN in a PINK1-dependent manner, leading to its degradation. In terms of tissue distribution, ubiquitously expressed. Highly expressed in heart, liver, skeletal muscle, kidney and pancreas.

The protein resides in the mitochondrion outer membrane. The catalysed reaction is GTP + H2O = GDP + phosphate + H(+). The enzyme catalyses ATP + H2O = ADP + phosphate + H(+). It carries out the reaction UTP + H2O = UDP + phosphate + H(+). In terms of biological role, atypical mitochondrial nucleoside-triphosphatase (NTPase) involved in mitochondrial trafficking. Probably involved in control of anterograde transport of mitochondria and their subcellular distribution. Can hydrolyze GTP. Can hydrolyze ATP and UTP. This Homo sapiens (Human) protein is Mitochondrial Rho GTPase 2 (RHOT2).